Consider the following 274-residue polypeptide: Bis(5'-nucleosyl)-tetraphosphatase, symmetrical (274 aa).

This sequence belongs to the Ap4A hydrolase family.

It catalyses the reaction P(1),P(4)-bis(5'-adenosyl) tetraphosphate + H2O = 2 ADP + 2 H(+). In terms of biological role, hydrolyzes diadenosine 5',5'''-P1,P4-tetraphosphate to yield ADP. The chain is Bis(5'-nucleosyl)-tetraphosphatase, symmetrical from Shewanella sp. (strain MR-4).